The following is a 202-amino-acid chain: Small ribosomal subunit protein uS4c (202 aa).

In terms of domain architecture, S4 RNA-binding spans 90–153 (MRLDNIIFRL…KSQAIISKNI (64 aa)).

The protein belongs to the universal ribosomal protein uS4 family. In terms of assembly, part of the 30S ribosomal subunit. Contacts protein S5. The interaction surface between S4 and S5 is involved in control of translational fidelity.

The protein resides in the plastid. It localises to the chloroplast. One of the primary rRNA binding proteins, it binds directly to 16S rRNA where it nucleates assembly of the body of the 30S subunit. Functionally, with S5 and S12 plays an important role in translational accuracy. In Splachnum sphaericum (Pinkstink dung moss), this protein is Small ribosomal subunit protein uS4c (rps4).